A 421-amino-acid polypeptide reads, in one-letter code: Tyrosine--tRNA ligase (421 aa).

L-tyrosine is bound at residue Tyr42. The short motif at 47 to 56 (CTAPSLHVGS) is the 'HIGH' region element. L-tyrosine contacts are provided by Tyr179 and Gln183. The short motif at 239-243 (KMGKT) is the 'KMSKS' region element. Lys242 contacts ATP. Residues 354 to 419 (LGILAAFAKA…RKKHVLLRLA (66 aa)) form the S4 RNA-binding domain.

Belongs to the class-I aminoacyl-tRNA synthetase family. TyrS type 1 subfamily. As to quaternary structure, homodimer.

It localises to the cytoplasm. It carries out the reaction tRNA(Tyr) + L-tyrosine + ATP = L-tyrosyl-tRNA(Tyr) + AMP + diphosphate + H(+). In terms of biological role, catalyzes the attachment of tyrosine to tRNA(Tyr) in a two-step reaction: tyrosine is first activated by ATP to form Tyr-AMP and then transferred to the acceptor end of tRNA(Tyr). This is Tyrosine--tRNA ligase from Beijerinckia indica subsp. indica (strain ATCC 9039 / DSM 1715 / NCIMB 8712).